Reading from the N-terminus, the 360-residue chain is Membrane-bound lytic murein transglycosylase C (360 aa).

Positions 1–16 are cleaved as a signal peptide; sequence MKKLLALAVIAPLLIS. The N-palmitoyl cysteine moiety is linked to residue Cys-17. The S-diacylglycerol cysteine moiety is linked to residue Cys-17.

It belongs to the transglycosylase Slt family.

The protein localises to the cell outer membrane. It carries out the reaction Exolytic cleavage of the (1-&gt;4)-beta-glycosidic linkage between N-acetylmuramic acid (MurNAc) and N-acetylglucosamine (GlcNAc) residues in peptidoglycan, from either the reducing or the non-reducing ends of the peptidoglycan chains, with concomitant formation of a 1,6-anhydrobond in the MurNAc residue.. Functionally, murein-degrading enzyme. May play a role in recycling of muropeptides during cell elongation and/or cell division. This chain is Membrane-bound lytic murein transglycosylase C, found in Salmonella paratyphi A (strain ATCC 9150 / SARB42).